The following is a 537-amino-acid chain: 6-phosphogluconate dehydrogenase, decarboxylating 2, chloroplastic (537 aa).

The N-terminal 44 residues, 1 to 44 (MRSEVPSSTSPSFLSPPFIHLPLLSLSSPTPLPHSSSSTFSLFS), are a transit peptide targeting the chloroplast. NADP(+) is bound by residues 55–60 (GLAVMG), 78–80 (NRT), 122–124 (VKA), and Asn-150. Substrate contacts are provided by residues Asn-150 and 176–178 (SGG). The active-site Proton acceptor is the Lys-230. Residue 233-234 (HN) coordinates substrate. The Proton donor role is filled by Glu-237. Residues Tyr-238, Lys-308, Arg-335, Arg-500, and His-506 each contribute to the substrate site.

It belongs to the 6-phosphogluconate dehydrogenase family. In terms of assembly, homodimer.

The protein resides in the plastid. Its subcellular location is the chloroplast. It catalyses the reaction 6-phospho-D-gluconate + NADP(+) = D-ribulose 5-phosphate + CO2 + NADPH. It participates in carbohydrate degradation; pentose phosphate pathway; D-ribulose 5-phosphate from D-glucose 6-phosphate (oxidative stage): step 3/3. In terms of biological role, catalyzes the oxidative decarboxylation of 6-phosphogluconate to ribulose 5-phosphate and CO(2), with concomitant reduction of NADP to NADPH. In Spinacia oleracea (Spinach), this protein is 6-phosphogluconate dehydrogenase, decarboxylating 2, chloroplastic.